The following is a 348-amino-acid chain: Isopentenyl-diphosphate delta-isomerase (348 aa).

9-10 (RK) contributes to the substrate binding site. FMN contacts are provided by residues 68-70 (AMT), Ser-98, and Asn-127. Gln-157 is a binding site for substrate. Glu-158 contributes to the Mg(2+) binding site. FMN contacts are provided by residues Lys-188, Ser-213, Thr-218, and 286–287 (AG).

It belongs to the IPP isomerase type 2 family. Homooctamer. Dimer of tetramers. Requires FMN as cofactor. NADPH serves as cofactor. It depends on Mg(2+) as a cofactor.

Its subcellular location is the cytoplasm. It carries out the reaction isopentenyl diphosphate = dimethylallyl diphosphate. In terms of biological role, involved in the biosynthesis of isoprenoids. Catalyzes the 1,3-allylic rearrangement of the homoallylic substrate isopentenyl (IPP) to its allylic isomer, dimethylallyl diphosphate (DMAPP). This is Isopentenyl-diphosphate delta-isomerase from Limosilactobacillus reuteri subsp. reuteri (strain JCM 1112) (Lactobacillus reuteri).